A 402-amino-acid polypeptide reads, in one-letter code: Imidazolonepropionase (402 aa).

Fe(3+) is bound by residues His-66 and His-68. Zn(2+) is bound by residues His-66 and His-68. 3 residues coordinate 4-imidazolone-5-propanoate: Arg-75, Tyr-138, and His-171. Tyr-138 contacts N-formimidoyl-L-glutamate. His-236 is a binding site for Fe(3+). His-236 is a Zn(2+) binding site. Gln-239 contacts 4-imidazolone-5-propanoate. Asp-311 provides a ligand contact to Fe(3+). Residue Asp-311 coordinates Zn(2+). N-formimidoyl-L-glutamate is bound by residues Asn-313 and Gly-315. Thr-316 serves as a coordination point for 4-imidazolone-5-propanoate.

This sequence belongs to the metallo-dependent hydrolases superfamily. HutI family. The cofactor is Zn(2+). Fe(3+) serves as cofactor.

Its subcellular location is the cytoplasm. The enzyme catalyses 4-imidazolone-5-propanoate + H2O = N-formimidoyl-L-glutamate. Its pathway is amino-acid degradation; L-histidine degradation into L-glutamate; N-formimidoyl-L-glutamate from L-histidine: step 3/3. Its function is as follows. Catalyzes the hydrolytic cleavage of the carbon-nitrogen bond in imidazolone-5-propanoate to yield N-formimidoyl-L-glutamate. It is the third step in the universal histidine degradation pathway. The polypeptide is Imidazolonepropionase (Pseudomonas aeruginosa (strain ATCC 15692 / DSM 22644 / CIP 104116 / JCM 14847 / LMG 12228 / 1C / PRS 101 / PAO1)).